A 41-amino-acid polypeptide reads, in one-letter code: Large ribosomal subunit protein bL36 (41 aa).

It belongs to the bacterial ribosomal protein bL36 family.

The protein is Large ribosomal subunit protein bL36 of Paracoccus denitrificans (strain Pd 1222).